The primary structure comprises 342 residues: Nicotinate-nucleotide--dimethylbenzimidazole phosphoribosyltransferase (342 aa).

Catalysis depends on Glu311, which acts as the Proton acceptor.

Belongs to the CobT family.

It carries out the reaction 5,6-dimethylbenzimidazole + nicotinate beta-D-ribonucleotide = alpha-ribazole 5'-phosphate + nicotinate + H(+). The protein operates within nucleoside biosynthesis; alpha-ribazole biosynthesis; alpha-ribazole from 5,6-dimethylbenzimidazole: step 1/2. Catalyzes the synthesis of alpha-ribazole-5'-phosphate from nicotinate mononucleotide (NAMN) and 5,6-dimethylbenzimidazole (DMB). This is Nicotinate-nucleotide--dimethylbenzimidazole phosphoribosyltransferase from Vibrio atlanticus (strain LGP32) (Vibrio splendidus (strain Mel32)).